The following is a 132-amino-acid chain: MCDQFVGTWKFLSSENFEDYMKELGVGFATRKMAGVAKPNVTISINGDVITIKTESTFKNTEVSFRLGEEFDETTADDRKTKNVITLDNGILNQVQKWDGKETVIKRKVMDGNLVVECTMNTVTSKRVYERA.

The short motif at Lys-22–Lys-32 is the Nuclear localization signal element. Residues Arg-107 and Arg-127 each coordinate (9Z,12Z)-octadecadienoate.

It belongs to the calycin superfamily. Fatty-acid binding protein (FABP) family. Monomer.

The protein resides in the cytoplasm. The protein localises to the nucleus. Functionally, lipid transport protein in adipocytes. Binds both long chain fatty acids and retinoic acid. Delivers long-chain fatty acids and retinoic acid to their cognate receptors in the nucleus. Has the highest binding affinity for linoleic acid and decreasing relative affinity for eicosapentaenoic acid (EPA), alpha-linolenic acid (ALA), docosahexaenoic acid (DHA), oleic acid, palmitic acid and stearic acid, respectively. This chain is Fatty acid-binding protein, adipocyte, found in Pygoscelis papua (Gentoo penguin).